Here is a 462-residue protein sequence, read N- to C-terminus: Argininosuccinate lyase (462 aa).

Belongs to the lyase 1 family. Argininosuccinate lyase subfamily.

It is found in the cytoplasm. It catalyses the reaction 2-(N(omega)-L-arginino)succinate = fumarate + L-arginine. It functions in the pathway amino-acid biosynthesis; L-arginine biosynthesis; L-arginine from L-ornithine and carbamoyl phosphate: step 3/3. The chain is Argininosuccinate lyase from Bacillus mycoides (strain KBAB4) (Bacillus weihenstephanensis).